The primary structure comprises 309 residues: Protoheme IX farnesyltransferase 2 (309 aa).

Helical transmembrane passes span 35–55, 59–79, 107–127, 131–151, 159–179, 186–206, 238–258, and 289–309; these read FKVV…APDV, MGVQ…AAVI, AHAL…LMLW, LTAI…TSFL, IVIG…SETG, WLLV…LAIA, LLAI…IYLI, and FSII…WLLL.

The protein belongs to the UbiA prenyltransferase family. Protoheme IX farnesyltransferase subfamily.

The protein resides in the cell inner membrane. It carries out the reaction heme b + (2E,6E)-farnesyl diphosphate + H2O = Fe(II)-heme o + diphosphate. Its pathway is porphyrin-containing compound metabolism; heme O biosynthesis; heme O from protoheme: step 1/1. Functionally, converts heme B (protoheme IX) to heme O by substitution of the vinyl group on carbon 2 of heme B porphyrin ring with a hydroxyethyl farnesyl side group. In Pseudoalteromonas translucida (strain TAC 125), this protein is Protoheme IX farnesyltransferase 2.